A 324-amino-acid chain; its full sequence is Beta-ketoacyl-[acyl-carrier-protein] synthase III (324 aa).

Active-site residues include C112 and H249. An ACP-binding region spans residues 250–254; sequence QANRR. N279 is a catalytic residue.

The protein belongs to the thiolase-like superfamily. FabH family. In terms of assembly, homodimer.

Its subcellular location is the cytoplasm. It catalyses the reaction malonyl-[ACP] + acetyl-CoA + H(+) = 3-oxobutanoyl-[ACP] + CO2 + CoA. It participates in lipid metabolism; fatty acid biosynthesis. Its function is as follows. Catalyzes the condensation reaction of fatty acid synthesis by the addition to an acyl acceptor of two carbons from malonyl-ACP. Catalyzes the first condensation reaction which initiates fatty acid synthesis and may therefore play a role in governing the total rate of fatty acid production. Possesses both acetoacetyl-ACP synthase and acetyl transacylase activities. Its substrate specificity determines the biosynthesis of branched-chain and/or straight-chain of fatty acids. The sequence is that of Beta-ketoacyl-[acyl-carrier-protein] synthase III from Streptococcus equi subsp. zooepidemicus (strain H70).